Reading from the N-terminus, the 871-residue chain is MAKIRIHEIAKELGYDSKEIIEKANELGLGIKTASNAVEPEIAAAIYEYIQTREIPEAFKKNIKTPTAKKPKKENIKEQEKLNESEKKEPKKEEKLKQEVKKEELKVEKENVKEEEKQEIIDAHKPQSLASATLAKRRGLVIVKKKKDEEEIQVKKEEVKNSNDISINNEERLSLKTMFSNADESLKKKKKEKKSFVASKKESTEKMNFLDEHDFGDISLDDEDEVVLPDFSVKEQEKPQNINKKQPNFIRQAVGNSAGFGLEGGIQRRSRKKPPKKIEKKEVEEVSSVAISKEIRVYEFADKIGKSTSEVISKLFMLGMMTTKNDFLDEDAIEILAAEFGIEINIINEADEFDYVKDYEEETDEKDLVTRAPVITIMGHVDHGKTSLLDYIRKSRVASGEAGGITQHVGAYMVEKNGRKITFIDTPGHEAFTAMRARGASITDIVIIVVAADDGVKPQTKEAINHAKAAGVPIIIAINKMDKEAANPDMVKTQLAEMEIMPVEWGGSYEFVGVSAKTGMGIEDLLEIVLLQADILELKANPKSFAKASIIESSVQKGRGAVATIIVQNGTLTVGSTVVAGEAYGKVRAMSDDQGKALKEIKPGECGVIVGLSEVADAGEILIAVKTDKEAREYANKRHEYNRQKELSKSTKVSIDELGAKIKEGNLKALPVILKADVQGSLEALKASLEKLRNDEIKVNIIHSGVGGITQSDIELASASENSIVLGFNIRPTGEVKERAKDKGVEIKTYNVIYNLLDDVKALLGGMMSPIISEEQLGQAEIRQVINVPKIGQIAGCMVTEGVINRGAKIRLIRDGVVVYEGNVSSLKRFKDDAKEVAKGYECGVGIEGCDDMRVGDYIESYKEVEEQASL.

Disordered stretches follow at residues 60–101 (KKNI…QEVK) and 184–203 (ESLKKKKKEKKSFVASKKES). Basic residues predominate over residues 61-72 (KNIKTPTAKKPK). Over residues 73–101 (KENIKEQEKLNESEKKEPKKEEKLKQEVK) the composition is skewed to basic and acidic residues. In terms of domain architecture, tr-type G spans 370–537 (TRAPVITIMG…IVLLQADILE (168 aa)). Residues 379-386 (GHVDHGKT) are G1. GTP is bound at residue 379 to 386 (GHVDHGKT). The G2 stretch occupies residues 404 to 408 (GITQH). A G3 region spans residues 425 to 428 (DTPG). GTP-binding positions include 425-429 (DTPGH) and 479-482 (NKMD). The G4 stretch occupies residues 479 to 482 (NKMD). Positions 515–517 (SAK) are G5.

Belongs to the TRAFAC class translation factor GTPase superfamily. Classic translation factor GTPase family. IF-2 subfamily.

It localises to the cytoplasm. Its function is as follows. One of the essential components for the initiation of protein synthesis. Protects formylmethionyl-tRNA from spontaneous hydrolysis and promotes its binding to the 30S ribosomal subunits. Also involved in the hydrolysis of GTP during the formation of the 70S ribosomal complex. This Campylobacter jejuni subsp. jejuni serotype O:6 (strain 81116 / NCTC 11828) protein is Translation initiation factor IF-2.